Here is a 213-residue protein sequence, read N- to C-terminus: Phosphatidylserine decarboxylase proenzyme (213 aa).

S182 serves as the catalytic Schiff-base intermediate with substrate; via pyruvic acid. Position 182 is a pyruvic acid (Ser); by autocatalysis (S182).

It belongs to the phosphatidylserine decarboxylase family. PSD-A subfamily. As to quaternary structure, heterodimer of a large membrane-associated beta subunit and a small pyruvoyl-containing alpha subunit. It depends on pyruvate as a cofactor. Is synthesized initially as an inactive proenzyme. Formation of the active enzyme involves a self-maturation process in which the active site pyruvoyl group is generated from an internal serine residue via an autocatalytic post-translational modification. Two non-identical subunits are generated from the proenzyme in this reaction, and the pyruvate is formed at the N-terminus of the alpha chain, which is derived from the carboxyl end of the proenzyme. The post-translation cleavage follows an unusual pathway, termed non-hydrolytic serinolysis, in which the side chain hydroxyl group of the serine supplies its oxygen atom to form the C-terminus of the beta chain, while the remainder of the serine residue undergoes an oxidative deamination to produce ammonia and the pyruvoyl prosthetic group on the alpha chain.

Its subcellular location is the cell membrane. It catalyses the reaction a 1,2-diacyl-sn-glycero-3-phospho-L-serine + H(+) = a 1,2-diacyl-sn-glycero-3-phosphoethanolamine + CO2. It participates in phospholipid metabolism; phosphatidylethanolamine biosynthesis; phosphatidylethanolamine from CDP-diacylglycerol: step 2/2. Functionally, catalyzes the formation of phosphatidylethanolamine (PtdEtn) from phosphatidylserine (PtdSer). This Geotalea daltonii (strain DSM 22248 / JCM 15807 / FRC-32) (Geobacter daltonii) protein is Phosphatidylserine decarboxylase proenzyme.